Consider the following 76-residue polypeptide: Acyl carrier protein (76 aa).

Positions 1–76 (MSVEEKVKKI…DAIDYIAGKQ (76 aa)) constitute a Carrier domain. Ser36 carries the post-translational modification O-(pantetheine 4'-phosphoryl)serine.

The protein belongs to the acyl carrier protein (ACP) family. 4'-phosphopantetheine is transferred from CoA to a specific serine of apo-ACP by AcpS. This modification is essential for activity because fatty acids are bound in thioester linkage to the sulfhydryl of the prosthetic group.

Its subcellular location is the cytoplasm. It functions in the pathway lipid metabolism; fatty acid biosynthesis. In terms of biological role, carrier of the growing fatty acid chain in fatty acid biosynthesis. The protein is Acyl carrier protein of Oleidesulfovibrio alaskensis (strain ATCC BAA-1058 / DSM 17464 / G20) (Desulfovibrio alaskensis).